Here is a 319-residue protein sequence, read N- to C-terminus: Acetyl-coenzyme A carboxylase carboxyl transferase subunit alpha (319 aa).

One can recognise a CoA carboxyltransferase C-terminal domain in the interval 35-296 (NLDEEVQRLR…KAQLLIDLAE (262 aa)).

The protein belongs to the AccA family. Acetyl-CoA carboxylase is a heterohexamer composed of biotin carboxyl carrier protein (AccB), biotin carboxylase (AccC) and two subunits each of ACCase subunit alpha (AccA) and ACCase subunit beta (AccD).

The protein localises to the cytoplasm. The enzyme catalyses N(6)-carboxybiotinyl-L-lysyl-[protein] + acetyl-CoA = N(6)-biotinyl-L-lysyl-[protein] + malonyl-CoA. It functions in the pathway lipid metabolism; malonyl-CoA biosynthesis; malonyl-CoA from acetyl-CoA: step 1/1. Its function is as follows. Component of the acetyl coenzyme A carboxylase (ACC) complex. First, biotin carboxylase catalyzes the carboxylation of biotin on its carrier protein (BCCP) and then the CO(2) group is transferred by the carboxyltransferase to acetyl-CoA to form malonyl-CoA. The protein is Acetyl-coenzyme A carboxylase carboxyl transferase subunit alpha of Photorhabdus laumondii subsp. laumondii (strain DSM 15139 / CIP 105565 / TT01) (Photorhabdus luminescens subsp. laumondii).